The chain runs to 380 residues: Cyclohexane-1-carbonyl-CoA dehydrogenase (380 aa).

It belongs to the acyl-CoA dehydrogenase family. As to quaternary structure, homotetramer. FAD serves as cofactor.

It carries out the reaction cyclohexane-1-carbonyl-CoA + oxidized [electron-transfer flavoprotein] + H(+) = cyclohex-1-ene-1-carbonyl-CoA + reduced [electron-transfer flavoprotein]. Its function is as follows. Acyl-CoA dehydrogenase involved in the anaerobic degradation of cyclohexane carboxylic acid (CHC). Catalyzes the 1,2-dehydrogenation of cyclohexane-1-carbonyl-CoA (CHCoA) to cyclohex-1-ene-1-carbonyl-CoA (CHeneCoA). An alternative substrate, cyclohex-3-ene-1-carboxyl-CoA can be converted to the corresponding cyclohexadiene-1-carboxyl-CoA isomers (30% rate compared to CHC). This Geobacter metallireducens (strain ATCC 53774 / DSM 7210 / GS-15) protein is Cyclohexane-1-carbonyl-CoA dehydrogenase.